A 303-amino-acid chain; its full sequence is Probable 5-dehydro-4-deoxyglucarate dehydratase (303 aa).

It belongs to the DapA family.

The catalysed reaction is 5-dehydro-4-deoxy-D-glucarate + H(+) = 2,5-dioxopentanoate + CO2 + H2O. It functions in the pathway carbohydrate acid metabolism; D-glucarate degradation; 2,5-dioxopentanoate from D-glucarate: step 2/2. In Polaromonas naphthalenivorans (strain CJ2), this protein is Probable 5-dehydro-4-deoxyglucarate dehydratase.